Reading from the N-terminus, the 150-residue chain is Nascent polypeptide-associated complex subunit beta (150 aa).

Disordered stretches follow at residues 1-45 (MADV…LQQS) and 123-150 (YQNM…NKVE). Residues 23–32 (TPRRKVKRAP) show a composition bias toward basic residues. In terms of domain architecture, NAC-A/B spans 36–101 (GADDKKLQQS…GEDKELTELV (66 aa)).

Belongs to the NAC-beta family. As to quaternary structure, part of the nascent polypeptide-associated complex (NAC), consisting of EGD2 and EGD1. NAC associates with ribosomes via EGD1.

The protein resides in the cytoplasm. It localises to the nucleus. Its function is as follows. Component of the nascent polypeptide-associated complex (NAC), a dynamic component of the ribosomal exit tunnel, protecting the emerging polypeptides from interaction with other cytoplasmic proteins to ensure appropriate nascent protein targeting. The NAC complex also promotes mitochondrial protein import by enhancing productive ribosome interactions with the outer mitochondrial membrane and blocks the inappropriate interaction of ribosomes translating non-secretory nascent polypeptides with translocation sites in the membrane of the endoplasmic reticulum. EGD1 may act as a transcription factor that exert a negative effect on the expression of several genes that are transcribed by RNA polymerase II. In Chaetomium globosum (strain ATCC 6205 / CBS 148.51 / DSM 1962 / NBRC 6347 / NRRL 1970) (Soil fungus), this protein is Nascent polypeptide-associated complex subunit beta (EGD1).